The chain runs to 183 residues: Orotate phosphoribosyltransferase (183 aa).

5-phospho-alpha-D-ribose 1-diphosphate-binding positions include R21, K88, and 112-120 (EDVVTTGES). The orotate site is built by T116 and R144.

It belongs to the purine/pyrimidine phosphoribosyltransferase family. PyrE subfamily. As to quaternary structure, homodimer. Mg(2+) serves as cofactor.

The enzyme catalyses orotidine 5'-phosphate + diphosphate = orotate + 5-phospho-alpha-D-ribose 1-diphosphate. It participates in pyrimidine metabolism; UMP biosynthesis via de novo pathway; UMP from orotate: step 1/2. Its function is as follows. Catalyzes the transfer of a ribosyl phosphate group from 5-phosphoribose 1-diphosphate to orotate, leading to the formation of orotidine monophosphate (OMP). The chain is Orotate phosphoribosyltransferase from Thermus thermophilus (strain ATCC 27634 / DSM 579 / HB8).